The following is an 85-amino-acid chain: Sec-independent protein translocase protein TatA (85 aa).

Residues 1–21 (MAGLQGWQLVIIILLAILLFA) traverse the membrane as a helical segment. A disordered region spans residues 43–85 (VKQMRTEGKDAKDERSGTGSTAADEPVEGRVVDRDETDPRDQR). Basic and acidic residues-rich tracts occupy residues 44 to 58 (KQMRTEGKDAKDERS) and 69 to 85 (VEGRVVDRDETDPRDQR).

It belongs to the TatA/E family. The Tat system comprises two distinct complexes: a TatABC complex, containing multiple copies of TatA, TatB and TatC subunits, and a separate TatA complex, containing only TatA subunits. Substrates initially bind to the TatABC complex, which probably triggers association of the separate TatA complex to form the active translocon.

Its subcellular location is the cell membrane. In terms of biological role, part of the twin-arginine translocation (Tat) system that transports large folded proteins containing a characteristic twin-arginine motif in their signal peptide across membranes. TatA could form the protein-conducting channel of the Tat system. The chain is Sec-independent protein translocase protein TatA from Micrococcus luteus (strain ATCC 4698 / DSM 20030 / JCM 1464 / CCM 169 / CCUG 5858 / IAM 1056 / NBRC 3333 / NCIMB 9278 / NCTC 2665 / VKM Ac-2230) (Micrococcus lysodeikticus).